The sequence spans 564 residues: Ribulokinase (564 aa).

It belongs to the ribulokinase family.

It carries out the reaction D-ribulose + ATP = D-ribulose 5-phosphate + ADP + H(+). The enzyme catalyses L-ribulose + ATP = L-ribulose 5-phosphate + ADP + H(+). It functions in the pathway carbohydrate degradation; L-arabinose degradation via L-ribulose; D-xylulose 5-phosphate from L-arabinose (bacterial route): step 2/3. This Geobacillus thermodenitrificans (strain NG80-2) protein is Ribulokinase.